The primary structure comprises 633 residues: Membrane protein insertase YidC (633 aa).

6 helical membrane passes run 3-23 (KNTLIGFLLIGVVLFAFSWFN), 377-397 (FIHNYGILILLMTIIVKIILF), 453-473 (LPMLLQMPILIALFMFFPSAI), 499-519 (IPIITPYFGNHISLFCLLMTI), 541-561 (GMKAMMYMMPLMFLVFFNQYA), and 562-582 (SGLTYYYFISTLITIVQTLIF). The segment at 612 to 633 (LEEAQRAQQETLRKQQEAKKKR) is disordered.

This sequence belongs to the OXA1/ALB3/YidC family. Type 1 subfamily. In terms of assembly, interacts with the Sec translocase complex via SecD. Specifically interacts with transmembrane segments of nascent integral membrane proteins during membrane integration.

Its subcellular location is the cell inner membrane. Required for the insertion and/or proper folding and/or complex formation of integral membrane proteins into the membrane. Involved in integration of membrane proteins that insert both dependently and independently of the Sec translocase complex, as well as at least some lipoproteins. Aids folding of multispanning membrane proteins. The polypeptide is Membrane protein insertase YidC (Parabacteroides distasonis (strain ATCC 8503 / DSM 20701 / CIP 104284 / JCM 5825 / NCTC 11152)).